A 407-amino-acid polypeptide reads, in one-letter code: Multifunctional CCA protein (407 aa).

Residues Gly-8 and Arg-11 each contribute to the ATP site. CTP-binding residues include Gly-8 and Arg-11. Asp-21 and Asp-23 together coordinate Mg(2+). ATP is bound by residues Arg-91, Arg-137, and Arg-140. Residues Arg-91, Arg-137, and Arg-140 each contribute to the CTP site. The 102-residue stretch at 226–327 folds into the HD domain; sequence TGIHVMAVVD…VKLLERTDAL (102 aa).

It belongs to the tRNA nucleotidyltransferase/poly(A) polymerase family. Bacterial CCA-adding enzyme type 1 subfamily. Monomer. Can also form homodimers and oligomers. It depends on Mg(2+) as a cofactor. Ni(2+) serves as cofactor.

The catalysed reaction is a tRNA precursor + 2 CTP + ATP = a tRNA with a 3' CCA end + 3 diphosphate. It carries out the reaction a tRNA with a 3' CCA end + 2 CTP + ATP = a tRNA with a 3' CCACCA end + 3 diphosphate. Functionally, catalyzes the addition and repair of the essential 3'-terminal CCA sequence in tRNAs without using a nucleic acid template. Adds these three nucleotides in the order of C, C, and A to the tRNA nucleotide-73, using CTP and ATP as substrates and producing inorganic pyrophosphate. tRNA 3'-terminal CCA addition is required both for tRNA processing and repair. Also involved in tRNA surveillance by mediating tandem CCA addition to generate a CCACCA at the 3' terminus of unstable tRNAs. While stable tRNAs receive only 3'-terminal CCA, unstable tRNAs are marked with CCACCA and rapidly degraded. The chain is Multifunctional CCA protein from Aromatoleum aromaticum (strain DSM 19018 / LMG 30748 / EbN1) (Azoarcus sp. (strain EbN1)).